A 475-amino-acid polypeptide reads, in one-letter code: Ribulose bisphosphate carboxylase large chain (475 aa).

The propeptide occupies 1 to 2; the sequence is MS. P3 is subject to N-acetylproline. K14 carries the post-translational modification N6,N6,N6-trimethyllysine. Substrate contacts are provided by N123 and T173. Catalysis depends on K175, which acts as the Proton acceptor. Residue K177 coordinates substrate. Mg(2+)-binding residues include K201, D203, and E204. N6-carboxylysine is present on K201. H294 serves as the catalytic Proton acceptor. R295, H327, and S379 together coordinate substrate.

The protein belongs to the RuBisCO large chain family. Type I subfamily. In terms of assembly, heterohexadecamer of 8 large chains and 8 small chains; disulfide-linked. The disulfide link is formed within the large subunit homodimers. It depends on Mg(2+) as a cofactor. In terms of processing, the disulfide bond which can form in the large chain dimeric partners within the hexadecamer appears to be associated with oxidative stress and protein turnover.

It localises to the plastid. The protein localises to the chloroplast. The catalysed reaction is 2 (2R)-3-phosphoglycerate + 2 H(+) = D-ribulose 1,5-bisphosphate + CO2 + H2O. The enzyme catalyses D-ribulose 1,5-bisphosphate + O2 = 2-phosphoglycolate + (2R)-3-phosphoglycerate + 2 H(+). RuBisCO catalyzes two reactions: the carboxylation of D-ribulose 1,5-bisphosphate, the primary event in carbon dioxide fixation, as well as the oxidative fragmentation of the pentose substrate in the photorespiration process. Both reactions occur simultaneously and in competition at the same active site. The chain is Ribulose bisphosphate carboxylase large chain from Populus trichocarpa (Western balsam poplar).